We begin with the raw amino-acid sequence, 377 residues long: Alanine racemase (377 aa).

K37 (proton acceptor; specific for D-alanine) is an active-site residue. K37 carries the post-translational modification N6-(pyridoxal phosphate)lysine. R135 lines the substrate pocket. Y271 functions as the Proton acceptor; specific for L-alanine in the catalytic mechanism. Substrate is bound at residue M319.

The protein belongs to the alanine racemase family. The cofactor is pyridoxal 5'-phosphate.

It catalyses the reaction L-alanine = D-alanine. The protein operates within amino-acid biosynthesis; D-alanine biosynthesis; D-alanine from L-alanine: step 1/1. Functionally, catalyzes the interconversion of L-alanine and D-alanine. May also act on other amino acids. The sequence is that of Alanine racemase (alr) from Helicobacter pylori (strain Shi470).